Here is a 130-residue protein sequence, read N- to C-terminus: Small ribosomal subunit protein uS9 (130 aa).

The interval 104 to 130 (LTRDPRMKERKKYGLKKARRAPQFSKR) is disordered. A compositionally biased stretch (basic residues) spans 111-130 (KERKKYGLKKARRAPQFSKR).

It belongs to the universal ribosomal protein uS9 family.

The sequence is that of Small ribosomal subunit protein uS9 from Ruminiclostridium cellulolyticum (strain ATCC 35319 / DSM 5812 / JCM 6584 / H10) (Clostridium cellulolyticum).